A 394-amino-acid chain; its full sequence is Phloroisovalerophenone synthase (394 aa).

The active site involves Cys-166.

This sequence belongs to the thiolase-like superfamily. Chalcone/stilbene synthases family. As to quaternary structure, homodimer. Expressed in lupulin gland. Present at low levels in leaves but accumulates in cones.

It carries out the reaction 3-methylbutanoyl-CoA + 3 malonyl-CoA + 3 H(+) = phlorisovalerophenone + 3 CO2 + 4 CoA. The enzyme catalyses (E)-4-coumaroyl-CoA + 3 malonyl-CoA + 3 H(+) = 2',4,4',6'-tetrahydroxychalcone + 3 CO2 + 4 CoA. The catalysed reaction is 2-methylpropanoyl-CoA + 3 malonyl-CoA + 3 H(+) = phlorisobutanophenone + 3 CO2 + 4 CoA. It participates in secondary metabolite biosynthesis. Involved in the biosynthesis of prenylated phenolics natural products which contribute to the bitter taste of beer and display broad biological activities. Polyketide synthase that can use 3-methylbutanoyl-CoA (isovaleryl-CoA) and 2-methylpropanoyl-CoA (isobutyryl-CoA) as substrates to produce phlorisovalerophenone (PIVP) and phlorisobutyrophenone (2-methyl-1-(2,4,6-trihydroxyphenyl)propan-1-one), respectively, intermediates in the biosynthesis of the bitter acids (alpha and beta) acids. Can also produce naringenin-chalcone (2',4,4',6'-tetrahydroxychalcone) from 4-coumaroyl-CoA with a lower efficiency. This Humulus lupulus (European hop) protein is Phloroisovalerophenone synthase.